The chain runs to 352 residues: Ketoisovalerate oxidoreductase subunit VorB (352 aa).

As to quaternary structure, heterotrimer of the VorA, VorB and VorC subunits.

It carries out the reaction 3-methyl-2-oxobutanoate + 2 oxidized [2Fe-2S]-[ferredoxin] + CoA = 2-methylpropanoyl-CoA + 2 reduced [2Fe-2S]-[ferredoxin] + CO2 + H(+). This Methanothermobacter thermautotrophicus (strain ATCC 29096 / DSM 1053 / JCM 10044 / NBRC 100330 / Delta H) (Methanobacterium thermoautotrophicum) protein is Ketoisovalerate oxidoreductase subunit VorB (vorB).